We begin with the raw amino-acid sequence, 774 residues long: 5-methyltetrahydropteroyltriglutamate--homocysteine methyltransferase (774 aa).

Residues 15-18 (RELK) and lysine 116 contribute to the 5-methyltetrahydropteroyltri-L-glutamate site. L-homocysteine-binding positions include 445–447 (IGS) and glutamate 498. Residues 445–447 (IGS) and glutamate 498 contribute to the L-methionine site. 5-methyltetrahydropteroyltri-L-glutamate-binding positions include 529–530 (RC) and tryptophan 575. An L-homocysteine-binding site is contributed by aspartate 613. Aspartate 613 contributes to the L-methionine binding site. Glutamate 619 provides a ligand contact to 5-methyltetrahydropteroyltri-L-glutamate. The Zn(2+) site is built by histidine 655, cysteine 657, and glutamate 679. The Proton donor role is filled by histidine 708. Cysteine 740 is a binding site for Zn(2+).

It belongs to the vitamin-B12 independent methionine synthase family. Zn(2+) is required as a cofactor.

It carries out the reaction 5-methyltetrahydropteroyltri-L-glutamate + L-homocysteine = tetrahydropteroyltri-L-glutamate + L-methionine. The protein operates within amino-acid biosynthesis; L-methionine biosynthesis via de novo pathway; L-methionine from L-homocysteine (MetE route): step 1/1. In terms of biological role, catalyzes the transfer of a methyl group from 5-methyltetrahydrofolate to homocysteine resulting in methionine formation. In Flavobacterium johnsoniae (strain ATCC 17061 / DSM 2064 / JCM 8514 / BCRC 14874 / CCUG 350202 / NBRC 14942 / NCIMB 11054 / UW101) (Cytophaga johnsonae), this protein is 5-methyltetrahydropteroyltriglutamate--homocysteine methyltransferase.